The chain runs to 260 residues: MAVGKNKRMSKGKKGGKKKAVDPFTKKDWYDIKAPSMFSVRNIGKTLVSRTQGTKIASDGLKGRIFEISLADLNNDEDQSFRKMKLKCEDVQGKNVLTNFAGMDFTTDKIRSLVRKWFSLIECFVDVKTTDGYTLRVFCIGFTKRRMDQAKRTCYAQSAQIRKIRAKMVEIITRECTTCDLKELVLKFIPEVIGKEIEKSCAGIYPLQNVYIRKVKILKAPKFDLTKLMEVHGDYSGEAVGEAVARPVEEKAEETAEAAE.

The segment covering 1–18 (MAVGKNKRMSKGKKGGKK) has biased composition (basic residues). A disordered region spans residues 1-20 (MAVGKNKRMSKGKKGGKKKA).

Belongs to the eukaryotic ribosomal protein eS1 family. As to quaternary structure, component of the small ribosomal subunit. Mature ribosomes consist of a small (40S) and a large (60S) subunit. The 40S subunit contains about 33 different proteins and 1 molecule of RNA (18S). The 60S subunit contains about 49 different proteins and 3 molecules of RNA (25S, 5.8S and 5S).

Its subcellular location is the cytoplasm. In Ostreococcus lucimarinus (strain CCE9901), this protein is Small ribosomal subunit protein eS1.